The sequence spans 358 residues: 4-diphosphocytidyl-2-C-methyl-D-erythritol kinase (358 aa).

Lys24 is a catalytic residue. Residue 138 to 148 participates in ATP binding; that stretch reads PVAGGMAGGSA. The active site involves Asp186.

The protein belongs to the GHMP kinase family. IspE subfamily.

It catalyses the reaction 4-CDP-2-C-methyl-D-erythritol + ATP = 4-CDP-2-C-methyl-D-erythritol 2-phosphate + ADP + H(+). It functions in the pathway isoprenoid biosynthesis; isopentenyl diphosphate biosynthesis via DXP pathway; isopentenyl diphosphate from 1-deoxy-D-xylulose 5-phosphate: step 3/6. Catalyzes the phosphorylation of the position 2 hydroxy group of 4-diphosphocytidyl-2C-methyl-D-erythritol. The protein is 4-diphosphocytidyl-2-C-methyl-D-erythritol kinase of Corynebacterium jeikeium (strain K411).